Reading from the N-terminus, the 142-residue chain is Large ribosomal subunit protein uL13 (142 aa).

Belongs to the universal ribosomal protein uL13 family. As to quaternary structure, part of the 50S ribosomal subunit.

This protein is one of the early assembly proteins of the 50S ribosomal subunit, although it is not seen to bind rRNA by itself. It is important during the early stages of 50S assembly. This chain is Large ribosomal subunit protein uL13, found in Akkermansia muciniphila (strain ATCC BAA-835 / DSM 22959 / JCM 33894 / BCRC 81048 / CCUG 64013 / CIP 107961 / Muc).